A 520-amino-acid chain; its full sequence is Dual specificity tyrosine-phosphorylation-regulated kinase 4 (520 aa).

The tract at residues 1-32 is disordered; sequence MPASELKASEIPFHPSIKTQDPKAEEKSPKKQ. A Bipartite nuclear localization signal motif is present at residues 19–37; the sequence is TQDPKAEEKSPKKQKVTLT. A compositionally biased stretch (basic and acidic residues) spans 20–29; sequence QDPKAEEKSP. The Protein kinase domain maps to 104-400; it reads YEVLETIGKG…PDQALKHAWI (297 aa). ATP-binding positions include 110-118, K133, and 183-186; these read IGKGSFGQV and FELL. D230 acts as the Proton acceptor in catalysis. Y264 carries the phosphotyrosine; by autocatalysis modification. A disordered region spans residues 404-467; it reads RNLKPQPRPQ…KHVQHSGDQQ (64 aa). Basic and acidic residues predominate over residues 439–457; sequence RKADEITKETTEKTKDSPT.

Belongs to the protein kinase superfamily. CMGC Ser/Thr protein kinase family. MNB/DYRK subfamily. Mg(2+) serves as cofactor. Autophosphorylation on Tyr-264 in the activation loop is required for kinase activity.

It localises to the cytoplasm. The protein resides in the nucleus. It carries out the reaction L-seryl-[protein] + ATP = O-phospho-L-seryl-[protein] + ADP + H(+). The enzyme catalyses L-threonyl-[protein] + ATP = O-phospho-L-threonyl-[protein] + ADP + H(+). The catalysed reaction is L-tyrosyl-[protein] + ATP = O-phospho-L-tyrosyl-[protein] + ADP + H(+). Functionally, possible non-essential role in spermiogenesis. The chain is Dual specificity tyrosine-phosphorylation-regulated kinase 4 (DYRK4) from Homo sapiens (Human).